We begin with the raw amino-acid sequence, 104 residues long: Large ribosomal subunit protein uL15z (104 aa).

Belongs to the universal ribosomal protein uL15 family.

This chain is Large ribosomal subunit protein uL15z (RPL27AA), found in Arabidopsis thaliana (Mouse-ear cress).